The primary structure comprises 348 residues: tRNA N6-adenosine threonylcarbamoyltransferase (348 aa).

The Fe cation site is built by histidine 115 and histidine 119. Substrate is bound by residues leucine 137–glycine 141, aspartate 170, glycine 183, and asparagine 281. Fe cation is bound at residue aspartate 309.

This sequence belongs to the KAE1 / TsaD family. The cofactor is Fe(2+).

The protein resides in the cytoplasm. It catalyses the reaction L-threonylcarbamoyladenylate + adenosine(37) in tRNA = N(6)-L-threonylcarbamoyladenosine(37) in tRNA + AMP + H(+). Required for the formation of a threonylcarbamoyl group on adenosine at position 37 (t(6)A37) in tRNAs that read codons beginning with adenine. Is involved in the transfer of the threonylcarbamoyl moiety of threonylcarbamoyl-AMP (TC-AMP) to the N6 group of A37, together with TsaE and TsaB. TsaD likely plays a direct catalytic role in this reaction. The chain is tRNA N6-adenosine threonylcarbamoyltransferase from Methylobacterium sp. (strain 4-46).